Reading from the N-terminus, the 91-residue chain is Small ribosomal subunit protein uS15 (91 aa).

The protein belongs to the universal ribosomal protein uS15 family. Part of the 30S ribosomal subunit. Forms a bridge to the 50S subunit in the 70S ribosome, contacting the 23S rRNA.

One of the primary rRNA binding proteins, it binds directly to 16S rRNA where it helps nucleate assembly of the platform of the 30S subunit by binding and bridging several RNA helices of the 16S rRNA. Functionally, forms an intersubunit bridge (bridge B4) with the 23S rRNA of the 50S subunit in the ribosome. This is Small ribosomal subunit protein uS15 from Legionella pneumophila (strain Paris).